The sequence spans 212 residues: Ribosomal RNA large subunit methyltransferase E (212 aa).

S-adenosyl-L-methionine is bound by residues Gly-57, Trp-59, Asp-77, Asp-93, and Asp-122. Lys-162 serves as the catalytic Proton acceptor.

It belongs to the class I-like SAM-binding methyltransferase superfamily. RNA methyltransferase RlmE family.

The protein localises to the cytoplasm. It carries out the reaction uridine(2552) in 23S rRNA + S-adenosyl-L-methionine = 2'-O-methyluridine(2552) in 23S rRNA + S-adenosyl-L-homocysteine + H(+). Specifically methylates the uridine in position 2552 of 23S rRNA at the 2'-O position of the ribose in the fully assembled 50S ribosomal subunit. The chain is Ribosomal RNA large subunit methyltransferase E from Coxiella burnetii (strain RSA 331 / Henzerling II).